Reading from the N-terminus, the 831-residue chain is Periplasmic nitrate reductase (831 aa).

A signal peptide (tat-type signal) is located at residues Met-1–Ala-31. The 4Fe-4S Mo/W bis-MGD-type domain maps to Ile-40–Asp-96. Cys-47, Cys-50, Cys-54, and Cys-82 together coordinate [4Fe-4S] cluster. Mo-bis(molybdopterin guanine dinucleotide) is bound by residues Lys-84, Gln-151, Asn-176, Cys-180, Trp-213–Met-220, Ser-244–His-248, Gln-263–Asp-265, Met-373, Gln-377, Asn-483, Ser-509–Asp-510, Lys-532, Asp-559, and Thr-719–Thr-728. Phe-795 serves as a coordination point for substrate. 2 residues coordinate Mo-bis(molybdopterin guanine dinucleotide): Asn-803 and Lys-820.

The protein belongs to the prokaryotic molybdopterin-containing oxidoreductase family. NasA/NapA/NarB subfamily. In terms of assembly, component of the periplasmic nitrate reductase NapAB complex composed of NapA and NapB. [4Fe-4S] cluster is required as a cofactor. Requires Mo-bis(molybdopterin guanine dinucleotide) as cofactor. Post-translationally, predicted to be exported by the Tat system. The position of the signal peptide cleavage has not been experimentally proven.

The protein resides in the periplasm. It carries out the reaction 2 Fe(II)-[cytochrome] + nitrate + 2 H(+) = 2 Fe(III)-[cytochrome] + nitrite + H2O. Functionally, catalytic subunit of the periplasmic nitrate reductase complex NapAB. Receives electrons from NapB and catalyzes the reduction of nitrate to nitrite. The chain is Periplasmic nitrate reductase from Yersinia enterocolitica serotype O:8 / biotype 1B (strain NCTC 13174 / 8081).